A 159-amino-acid chain; its full sequence is Phosphopantetheine adenylyltransferase (159 aa).

Ser-9 is a binding site for substrate. ATP-binding positions include 9 to 10 (SF) and His-17. Residues Lys-41, Leu-74, and Lys-88 each contribute to the substrate site. ATP-binding positions include 89 to 91 (GLR), Glu-99, and 123 to 129 (YLHLSST).

This sequence belongs to the bacterial CoaD family. As to quaternary structure, homohexamer. Mg(2+) serves as cofactor.

The protein localises to the cytoplasm. It carries out the reaction (R)-4'-phosphopantetheine + ATP + H(+) = 3'-dephospho-CoA + diphosphate. Its pathway is cofactor biosynthesis; coenzyme A biosynthesis; CoA from (R)-pantothenate: step 4/5. Its function is as follows. Reversibly transfers an adenylyl group from ATP to 4'-phosphopantetheine, yielding dephospho-CoA (dPCoA) and pyrophosphate. The sequence is that of Phosphopantetheine adenylyltransferase from Arthrobacter sp. (strain FB24).